The sequence spans 608 residues: Threonine--tRNA ligase (608 aa).

The interval 1-144 (MRILLIHSDY…SRTITAEEEE (144 aa)) is editing domain. The catalytic stretch occupies residues 195 to 489 (PHVKLMREKE…ELDEKAPMLP (295 aa)). Zn(2+)-binding residues include Cys286, His338, and His459.

It belongs to the class-II aminoacyl-tRNA synthetase family. As to quaternary structure, homodimer. It depends on Zn(2+) as a cofactor.

The protein localises to the cytoplasm. The catalysed reaction is tRNA(Thr) + L-threonine + ATP = L-threonyl-tRNA(Thr) + AMP + diphosphate + H(+). Its function is as follows. Catalyzes the attachment of threonine to tRNA(Thr) in a two-step reaction: L-threonine is first activated by ATP to form Thr-AMP and then transferred to the acceptor end of tRNA(Thr). Also edits incorrectly charged L-seryl-tRNA(Thr). This chain is Threonine--tRNA ligase, found in Methanobrevibacter smithii (strain ATCC 35061 / DSM 861 / OCM 144 / PS).